Consider the following 338-residue polypeptide: Ketol-acid reductoisomerase (NADP(+)) (338 aa).

In terms of domain architecture, KARI N-terminal Rossmann spans 1–181; the sequence is MQVYYDKDCD…GGGRTGIIET (181 aa). Residues 24–27, Arg47, Ser50, Ser52, and 82–85 each bind NADP(+); these read YGSQ and DEFQ. Residue His107 is part of the active site. An NADP(+)-binding site is contributed by Gly133. Positions 182–327 constitute a KARI C-terminal knotted domain; it reads TFKDETETDL…EKLRGMMPWI (146 aa). Mg(2+)-binding residues include Asp190, Glu194, Glu226, and Glu230. Residue Ser251 participates in substrate binding.

It belongs to the ketol-acid reductoisomerase family. Mg(2+) serves as cofactor.

The catalysed reaction is (2R)-2,3-dihydroxy-3-methylbutanoate + NADP(+) = (2S)-2-acetolactate + NADPH + H(+). It catalyses the reaction (2R,3R)-2,3-dihydroxy-3-methylpentanoate + NADP(+) = (S)-2-ethyl-2-hydroxy-3-oxobutanoate + NADPH + H(+). The protein operates within amino-acid biosynthesis; L-isoleucine biosynthesis; L-isoleucine from 2-oxobutanoate: step 2/4. Its pathway is amino-acid biosynthesis; L-valine biosynthesis; L-valine from pyruvate: step 2/4. Its function is as follows. Involved in the biosynthesis of branched-chain amino acids (BCAA). Catalyzes an alkyl-migration followed by a ketol-acid reduction of (S)-2-acetolactate (S2AL) to yield (R)-2,3-dihydroxy-isovalerate. In the isomerase reaction, S2AL is rearranged via a Mg-dependent methyl migration to produce 3-hydroxy-3-methyl-2-ketobutyrate (HMKB). In the reductase reaction, this 2-ketoacid undergoes a metal-dependent reduction by NADPH to yield (R)-2,3-dihydroxy-isovalerate. The sequence is that of Ketol-acid reductoisomerase (NADP(+)) from Alcanivorax borkumensis (strain ATCC 700651 / DSM 11573 / NCIMB 13689 / SK2).